Consider the following 56-residue polypeptide: Large ribosomal subunit protein bL32 (56 aa).

A disordered region spans residues 1-37; that stretch reads MAVQQNKKSRSRRDMRRSHDALTTAAISVDKASGEKH. The segment covering 7–16 has biased composition (basic residues); sequence KKSRSRRDMR.

It belongs to the bacterial ribosomal protein bL32 family.

The protein is Large ribosomal subunit protein bL32 (rpmF) of Pasteurella multocida (strain Pm70).